A 1245-amino-acid polypeptide reads, in one-letter code: TAL effector protein Brg11 (1245 aa).

Disordered stretches follow at residues 1-87 (MRIG…LVPE) and 173-205 (CPQAFASPPRAPRSARARRARTGGDAWPAPTFL). Over residues 67–87 (PRRPLPVAPASAPPAPSLVPE) the composition is skewed to pro residues. The short motif at 185–191 (RSARARR) is the Nuclear localization signal 1 element. One copy of the Cryptic repeat -1 repeat lies at 286–320 (LTRAHIVDIARQRSGDLALQALLPVATALTAAPLR). The Cryptic repeat 0 repeat unit spans residues 321 to 354 (LSASQIATVAQYGERPAIQALYRLRRKLTRAPLH). Core repeat repeat units lie at residues 355-389 (LTPQQVVAIASNTGGKRALEAVCVQLPVLRAAPYR), 390-424 (LSTEQVVAIASNKGGKQALEAVKAHLLDLLGAPYV), 425-459 (LDTEQVVAIASHNGGKQALEAVKADLLDLRGAPYA), 460-494 (LSTEQVVAIASHNGGKQALEAVKADLLELRGAPYA), 495-529 (LSTEQVVAIASHNGGKQALEAVKAHLLDLRGVPYA), 530-564 (LSTEQVVAIASHNGGKQALEAVKAQLLDLRGAPYA), 565-599 (LSTAQVVAIASNGGGKQALEGIGEQLLKLRTAPYG), 600-634 (LSTEQVVAIASHDGGKQALEAVGAQLVALRAAPYA), 635-669 (LSTEQVVAIASNKGGKQALEAVKAQLLELRGAPYA), 670-704 (LSTAQVVAIASHDGGNQALEAVGTQLVALRAAPYA), 705-739 (LSTEQVVAIASHDGGKQALEAVGAQLVALRAAPYA), 740-774 (LNTEQVVAIASSHGGKQALEAVRALFPDLRAAPYA), 775-809 (LSTAQLVAIASNPGGKQALEAVRALFRELRAAPYA), 810-844 (LSTEQVVAIASNHGGKQALEAVRALFRGLRAAPYG), 845-879 (LSTAQVVAIASSNGGKQALEAVWALLPVLRATPYD), and 880-914 (LNTAQIVAIASHDGGKPALEAVWAKLPVLRGAPYA). A Cryptic repeat +1 repeat occupies 915–948 (LSTAQVVAIACISGQQALEAIEAHMPTLRQASHS). Residues 949–982 (LSPERVAAIACIGGRSAVEAVRQGLPVKAIRRIR) form a Cryptic repeat +2 repeat. 3 short sequence motifs (nuclear localization signal) span residues 980-983 (RIRR), 1108-1111 (HRKR), and 1145-1148 (RRKR). The tract at residues 1096–1138 (SPGMAGQSACSPHRKRPAETAIAPRSIRRSPNNAGQPSEPWPD) is disordered. The interval 1237-1245 (DWLLQILET) is activation domain.

It belongs to the transcription activator-like effector (TALE) family. RipTAL/RTL subfamily.

The protein resides in the secreted. It is found in the host nucleus. Exported into plant cells, where it is targeted to the nucleus and probably acts as a transcription factor. Binds DNA in a sequence-specific manner. May contribute to plant pathogenicity. The polypeptide is TAL effector protein Brg11 (Ralstonia nicotianae (strain ATCC BAA-1114 / GMI1000) (Ralstonia solanacearum)).